A 104-amino-acid chain; its full sequence is Large ribosomal subunit protein bL21 (104 aa).

This sequence belongs to the bacterial ribosomal protein bL21 family. Part of the 50S ribosomal subunit. Contacts protein L20.

Functionally, this protein binds to 23S rRNA in the presence of protein L20. This chain is Large ribosomal subunit protein bL21, found in Helicobacter pylori (strain HPAG1).